The primary structure comprises 694 residues: MAATQATAARKFPEGLRVLAVDDSPVCLMLLEALLRRCKYQPTMTRDAATALRMLRERPGDFDLVISDVHMLDMDGFKLLELIGLEMDLPVIMQSANGELETMMKGVTHGACDYLVKPVSLKDIQNIWQHVWRKRKLDIRNHNGGYNDGGELVGATRTKRKYTRKMRNDGDNYGENKENMDSTLKRQRVVWTPELHRDFVIAVHELGVDRAVPRKILRMMKVDYMTRENIASHLQKYRLYLKRISTQTGMDPDQFPEKWKYMNELDALKNYCENGRYRLTPAIASSSSSNPFARMNSASALATNGFLPTHSVQLKNSQRNMAMGTVGHGGSPGNNPVFQPLQNSSNARKCFPSGPSGSSFANISNGLVLDTDDSGSSYAGMFCKSMWETSNGSPSCHSGNSSANKSNNGVSAPANQFQVQSKFGFSALANQFPVQSNCGFSAPANQYQVQSNGGFSVPANQFPVQSNGEFLAPTNQFPVQYPEVNNQPLVQMNQSSTNHFSTIGNDYQFPDLANCSKYWQPTAPSMFPDLGHNDGTSFRPSQANIANINQLSSFAASSGQEPMFGDELHGQMSPIMSTISLSDFDDQMGSFNIGNDTSPAEMMHDNFSLGSDSNISSSTPTDSSFGSTFPDFHLDSPEMPAQMLNGGDEDGILLPVLDDTVDQQDLFDQLDENNGREKLGSGRCVRKGPFECFF.

The Response regulatory domain maps to 17 to 132 (RVLAVDDSPV…DIQNIWQHVW (116 aa)). 4-aspartylphosphate is present on aspartate 68. Positions 183–242 (TLKRQRVVWTPELHRDFVIAVHELGVDRAVPRKILRMMKVDYMTRENIASHLQKYRLYLK) constitute an HTH myb-type domain. Residues 213 to 238 (PRKILRMMKVDYMTRENIASHLQKYR) constitute a DNA-binding region (H-T-H motif). The disordered stretch occupies residues 326–349 (VGHGGSPGNNPVFQPLQNSSNARK). The segment covering 333 to 347 (GNNPVFQPLQNSSNA) has biased composition (polar residues).

This sequence belongs to the ARR family. Type-B subfamily. Two-component system major event consists of a His-to-Asp phosphorelay between a sensor histidine kinase (HK) and a response regulator (RR). In plants, the His-to-Asp phosphorelay involves an additional intermediate named Histidine-containing phosphotransfer protein (HPt). This multistep phosphorelay consists of a His-Asp-His-Asp sequential transfer of a phosphate group between first a His and an Asp of the HK protein, followed by the transfer to a conserved His of the HPt protein and finally the transfer to an Asp in the receiver domain of the RR protein.

The protein resides in the nucleus. In terms of biological role, transcriptional activator that binds specific DNA sequence. Functions as a response regulator involved in His-to-Asp phosphorelay signal transduction system. Phosphorylation of the Asp residue in the receiver domain activates the ability of the protein to promote the transcription of target genes. May directly activate some type-A response regulators in response to cytokinins. The sequence is that of Two-component response regulator ORR25 from Oryza sativa subsp. japonica (Rice).